We begin with the raw amino-acid sequence, 433 residues long: D-amino acid dehydrogenase (433 aa).

3–17 is an FAD binding site; the sequence is IVVLGAGVLGVTSAW.

The protein belongs to the DadA oxidoreductase family. It depends on FAD as a cofactor.

The enzyme catalyses a D-alpha-amino acid + A + H2O = a 2-oxocarboxylate + AH2 + NH4(+). It functions in the pathway amino-acid degradation; D-alanine degradation; NH(3) and pyruvate from D-alanine: step 1/1. Oxidative deamination of D-amino acids. The chain is D-amino acid dehydrogenase from Paracoccus denitrificans (strain Pd 1222).